Reading from the N-terminus, the 83-residue chain is Large ribosomal subunit protein eL31 (83 aa).

The protein belongs to the eukaryotic ribosomal protein eL31 family.

This is Large ribosomal subunit protein eL31 from Methanococcus maripaludis (strain DSM 14266 / JCM 13030 / NBRC 101832 / S2 / LL).